The following is a 220-amino-acid chain: Claudin-6 (220 aa).

The Cytoplasmic segment spans residues 1 to 7 (MASAGMQ). Residues 8–28 (ILGVVLTLLGWVNGLVSCALP) traverse the membrane as a helical segment. The Extracellular portion of the chain corresponds to 29-81 (MWKVTAFIGNSIVVAQVVWEGLWMSCVVQSTGQMQCKVYDSLLALPQDLQAAR). The helical transmembrane segment at 82-102 (ALCVIALLVALFGLLVYLAGA) threads the bilayer. The Cytoplasmic segment spans residues 103–116 (KCTTCVEEKDSKAR). A helical transmembrane segment spans residues 117-137 (LVLTSGIVFVISGVLTLIPVC). Over 138 to 160 (WTAHAIIRDFYNPLVAEAQKREL) the chain is Extracellular. A helical membrane pass occupies residues 161-181 (GASLYLGWAASGLLLLGGGLL). The Cytoplasmic segment spans residues 182–220 (CCTCPSGGSQGPSHYMARYSTSAPAISRGPSEYPTKNYV). Phosphoserine occurs at positions 201, 203, 208, and 212. The interval 219–220 (YV) is interactions with TJP1, TJP2 and TJP3.

It belongs to the claudin family. In terms of assembly, directly interacts with TJP1/ZO-1, TJP2/ZO-2 and TJP3/ZO-3. Interacts with CLDN1, CD81 and OCLN. As to expression, expressed in the liver, in peripheral blood mononuclear cells and hepatocarcinoma cell lines.

Its subcellular location is the cell junction. The protein localises to the tight junction. The protein resides in the cell membrane. Functionally, plays a major role in tight junction-specific obliteration of the intercellular space. Its function is as follows. (Microbial infection) Acts as a receptor for hepatitis C virus (HCV) entry into hepatic cells. The chain is Claudin-6 (CLDN6) from Homo sapiens (Human).